We begin with the raw amino-acid sequence, 505 residues long: Maturase K (505 aa).

It belongs to the intron maturase 2 family. MatK subfamily.

It is found in the plastid. The protein resides in the chloroplast. In terms of biological role, usually encoded in the trnK tRNA gene intron. Probably assists in splicing its own and other chloroplast group II introns. The polypeptide is Maturase K (Morus indica (Mulberry)).